We begin with the raw amino-acid sequence, 388 residues long: Processive diacylglycerol beta-glucosyltransferase (388 aa).

The protein belongs to the glycosyltransferase 28 family. UgtP subfamily.

The protein localises to the cell membrane. The catalysed reaction is a 1,2-diacyl-3-O-(beta-D-glucopyranosyl)-sn-glycerol + UDP-alpha-D-glucose = a 1,2-diacyl-3-O-(beta-D-Glc-(1-&gt;6)-beta-D-Glc)-sn-glycerol + UDP + H(+). The enzyme catalyses a 1,2-diacyl-3-O-(beta-D-Glc-(1-&gt;6)-beta-D-Glc)-sn-glycerol + UDP-alpha-D-glucose = a 1,2-diacyl-3-O-(beta-D-Glc-(1-&gt;6)-beta-D-Glc-(1-&gt;6)-beta-D-Glc)-sn-glycerol + UDP + H(+). It catalyses the reaction a 1,2-diacyl-sn-glycerol + UDP-alpha-D-glucose = a 1,2-diacyl-3-O-(beta-D-glucopyranosyl)-sn-glycerol + UDP + H(+). Its pathway is glycolipid metabolism; diglucosyl-diacylglycerol biosynthesis. Its function is as follows. Processive glucosyltransferase involved in the biosynthesis of both the bilayer- and non-bilayer-forming membrane glucolipids. Is able to successively transfer up to three glucosyl residues to diacylglycerol (DAG), thereby catalyzing the formation of beta-monoglucosyl-DAG (3-O-(beta-D-glucopyranosyl)-1,2-diacyl-sn-glycerol), beta-diglucosyl-DAG (3-O-(beta-D-glucopyranosyl-beta-(1-&gt;6)-D-glucopyranosyl)-1,2-diacyl-sn-glycerol) and beta-triglucosyl-DAG (3-O-(beta-D-glucopyranosyl-beta-(1-&gt;6)-D-glucopyranosyl-beta-(1-&gt;6)-D-glucopyranosyl)-1,2-diacyl-sn-glycerol). Beta-diglucosyl-DAG is the predominant glycolipid found in Bacillales and is also used as a membrane anchor for lipoteichoic acid (LTA). The protein is Processive diacylglycerol beta-glucosyltransferase of Bacillus cereus (strain ATCC 14579 / DSM 31 / CCUG 7414 / JCM 2152 / NBRC 15305 / NCIMB 9373 / NCTC 2599 / NRRL B-3711).